We begin with the raw amino-acid sequence, 144 residues long: MNFKYIVAVSFLIASGYARSEENDVQSLSQREVLEEETLREIRGIGGALLSAGKSALKGLAKGLAEHFANGKRTAKGHEVMKRLEAVMRDLDSLDHPEEASERETRGFNQEEIANLFTKKEKRILGPVLSLVGSALGGLIKKIG.

Residues 1–18 (MNFKYIVAVSFLIASGYA) form the signal peptide. Positions 19-43 (RSEENDVQSLSQREVLEEETLREIR) are excised as a propeptide. Asparagine 70 is modified (asparagine amide). A propeptide spanning residues 74–123 (TAKGHEVMKRLEAVMRDLDSLDHPEEASERETRGFNQEEIANLFTKKEKR) is cleaved from the precursor. Isoleucine 143 is subject to Isoleucine amide.

The protein belongs to the bombinin family. In terms of tissue distribution, expressed by the skin glands.

The protein localises to the secreted. In terms of biological role, shows antimicrobial activity against bacteria and against the fungus C.albicans. It has little hemolytic activity. Functionally, shows antimicrobial activity against bacteria and against the fungus C.albicans. Shows strong hemolytic activity. The polypeptide is Maximins 6/Hv (Bombina maxima (Giant fire-bellied toad)).